The sequence spans 205 residues: MSLNYIKNFYEGCVKPPTVIGQFHTLFFGSIRIFFLGVLGFAVYGNEALHFICDPDKREVNLFCYNQFRPITPQVSFSALQLVIVLVPGALFHLYAACKSINQECILQKPIYTIIYILSVLLRISLAAIAFWLQIYLFGFQVKSLYLCDARSLGENMIIRCMVPEHFEKTIFLIAINTFTTITILLFVAEIFEIIFRRLYFPFRQ.

Residues 1-23 are Cytoplasmic-facing; sequence MSLNYIKNFYEGCVKPPTVIGQF. The chain crosses the membrane as a helical span at residues 24–44; sequence HTLFFGSIRIFFLGVLGFAVY. The Extracellular segment spans residues 45-76; sequence GNEALHFICDPDKREVNLFCYNQFRPITPQVS. Cystine bridges form between C53–C161 and C64–C148. Residues 77 to 97 form a helical membrane-spanning segment; sequence FSALQLVIVLVPGALFHLYAA. Topologically, residues 98–112 are cytoplasmic; that stretch reads CKSINQECILQKPIY. Residues 113–133 traverse the membrane as a helical segment; it reads TIIYILSVLLRISLAAIAFWL. The Extracellular segment spans residues 134–170; that stretch reads QIYLFGFQVKSLYLCDARSLGENMIIRCMVPEHFEKT. A helical transmembrane segment spans residues 171-191; that stretch reads IFLIAINTFTTITILLFVAEI. The Cytoplasmic segment spans residues 192 to 205; that stretch reads FEIIFRRLYFPFRQ.

This sequence belongs to the connexin family. Beta-type (group I) subfamily. As to quaternary structure, a connexon is composed of a hexamer of connexins. As to expression, not detected in lens or retina.

Its subcellular location is the cell membrane. Functionally, mediates calcium-independent ATP release, suggesting activity as a hemichannel. Does not form functional gap junctions. The sequence is that of Gap junction epsilon-1 protein (GJE1) from Homo sapiens (Human).